The chain runs to 183 residues: Holliday junction branch migration complex subunit RuvA (183 aa).

The domain I stretch occupies residues 1-64 (MVVGIEGIIT…EDSNKFYGFL (64 aa)). Residues 65–139 (DKDEQKMFEM…DTKTKLENVS (75 aa)) form a domain II region. Position 139 (Ser-139) is a region of interest, flexible linker. The segment at 139–183 (SDDKSEALAALLTLGFKQEKIISVLASAQATGTSELIKEALKKLG) is domain III.

This sequence belongs to the RuvA family. Homotetramer. Forms an RuvA(8)-RuvB(12)-Holliday junction (HJ) complex. HJ DNA is sandwiched between 2 RuvA tetramers; dsDNA enters through RuvA and exits via RuvB. An RuvB hexamer assembles on each DNA strand where it exits the tetramer. Each RuvB hexamer is contacted by two RuvA subunits (via domain III) on 2 adjacent RuvB subunits; this complex drives branch migration. In the full resolvosome a probable DNA-RuvA(4)-RuvB(12)-RuvC(2) complex forms which resolves the HJ.

It localises to the cytoplasm. In terms of biological role, the RuvA-RuvB-RuvC complex processes Holliday junction (HJ) DNA during genetic recombination and DNA repair, while the RuvA-RuvB complex plays an important role in the rescue of blocked DNA replication forks via replication fork reversal (RFR). RuvA specifically binds to HJ cruciform DNA, conferring on it an open structure. The RuvB hexamer acts as an ATP-dependent pump, pulling dsDNA into and through the RuvAB complex. HJ branch migration allows RuvC to scan DNA until it finds its consensus sequence, where it cleaves and resolves the cruciform DNA. The protein is Holliday junction branch migration complex subunit RuvA of Campylobacter jejuni subsp. jejuni serotype O:23/36 (strain 81-176).